The sequence spans 201 residues: Probable GTP-binding protein EngB (201 aa).

Residues 23 to 196 (TGPEIALAGR…HEAVEEILSM (174 aa)) enclose the EngB-type G domain. GTP-binding positions include 31–38 (GRSNVGKS), 58–62 (GKTQM), 76–79 (DLPG), 143–146 (TKAD), and 175–177 (YSA). 2 residues coordinate Mg(2+): Ser38 and Thr60.

Belongs to the TRAFAC class TrmE-Era-EngA-EngB-Septin-like GTPase superfamily. EngB GTPase family. Requires Mg(2+) as cofactor.

In terms of biological role, necessary for normal cell division and for the maintenance of normal septation. The polypeptide is Probable GTP-binding protein EngB (Desulfitobacterium hafniense (strain DSM 10664 / DCB-2)).